The following is a 511-amino-acid chain: Glucose-1-phosphate adenylyltransferase large subunit 1, chloroplastic/amyloplastic (511 aa).

The transit peptide at 1–58 (MAAMDLRVAAPASVAAAARCGTSLARPWPARAVGGGGGGGGRGRRLSVRTSVATTEAA) directs the protein to the chloroplast.

Belongs to the bacterial/plant glucose-1-phosphate adenylyltransferase family. In terms of assembly, heterotetramer composed of two small and two large subunits. Expressed in leaves and stems.

The protein localises to the plastid. Its subcellular location is the chloroplast. It localises to the amyloplast. The catalysed reaction is alpha-D-glucose 1-phosphate + ATP + H(+) = ADP-alpha-D-glucose + diphosphate. Its pathway is glycan biosynthesis; starch biosynthesis. Its activity is regulated as follows. Activated by 3'phosphoglycerate, inhibited by orthophosphate. Allosteric regulation. Functionally, involved in synthesis of starch. Catalyzes the synthesis of ADP-glucose, a molecule that serves as an activated glycosyl donor for alpha-1,4-glucan synthesis. Essential for starch synthesis in leaf chloroplasts and endosperm amyloplasts. The polypeptide is Glucose-1-phosphate adenylyltransferase large subunit 1, chloroplastic/amyloplastic (Oryza sativa subsp. japonica (Rice)).